The sequence spans 245 residues: E3 ubiquitin-protein ligase RNF138 (245 aa).

The residue at position 2 (A2) is an N-acetylalanine. The RING-type zinc-finger motif lies at 18-58 (CPVCQEVLKTPVRTAACQHVFCRKCFLTAMRESGIHCPLCR). C86, C89, H101, and C105 together coordinate Zn(2+). The C2HC RNF-type zinc-finger motif lies at 86–105 (CRCCAKQIKFYRMRHHYKSC). The disordered stretch occupies residues 128-153 (VGNSNRSETSASDNIETYQENTGSSG). C2H2-type zinc fingers lie at residues 157–180 (FKCPLCQESNFTRQRLLDHCNSNH) and 187–215 (VTCPICVSLPWGDPSQVTRNFVSHLNQRH). The 19-residue stretch at 225-243 (LQLDEETQYQTAVEESFQV) folds into the UIM domain.

Interacts with NLK. Interacts with XRCC5/Ku80. Interacts with RBBP8/CtIP. Auto-ubiquitinated.

Its subcellular location is the chromosome. It carries out the reaction S-ubiquitinyl-[E2 ubiquitin-conjugating enzyme]-L-cysteine + [acceptor protein]-L-lysine = [E2 ubiquitin-conjugating enzyme]-L-cysteine + N(6)-ubiquitinyl-[acceptor protein]-L-lysine.. It functions in the pathway protein modification; protein ubiquitination. Functionally, E3 ubiquitin-protein ligase involved in DNA damage response by promoting DNA resection and homologous recombination. Recruited to sites of double-strand breaks following DNA damage and specifically promotes double-strand break repair via homologous recombination. Two different, non-exclusive, mechanisms have been proposed. According to a report, regulates the choice of double-strand break repair by favoring homologous recombination over non-homologous end joining (NHEJ): acts by mediating ubiquitination of XRCC5/Ku80, leading to remove the Ku complex from DNA breaks, thereby promoting homologous recombination. According to another report, cooperates with UBE2Ds E2 ubiquitin ligases (UBE2D1, UBE2D2, UBE2D3 or UBE2D4) to promote homologous recombination by mediating ubiquitination of RBBP8/CtIP. Together with NLK, involved in the ubiquitination and degradation of TCF/LEF. Also exhibits auto-ubiquitination activity in combination with UBE2K. May act as a negative regulator in the Wnt/beta-catenin-mediated signaling pathway. The chain is E3 ubiquitin-protein ligase RNF138 (RNF138) from Bos taurus (Bovine).